The following is a 146-amino-acid chain: Deoxyuridine 5'-triphosphate nucleotidohydrolase (146 aa).

Residues 65–67 (RSG), Asn-78, 82–84 (LID), and Met-92 contribute to the substrate site.

Belongs to the dUTPase family. It depends on Mg(2+) as a cofactor.

It carries out the reaction dUTP + H2O = dUMP + diphosphate + H(+). Its pathway is pyrimidine metabolism; dUMP biosynthesis; dUMP from dCTP (dUTP route): step 2/2. Functionally, this enzyme is involved in nucleotide metabolism: it produces dUMP, the immediate precursor of thymidine nucleotides and it decreases the intracellular concentration of dUTP so that uracil cannot be incorporated into DNA. This Thiobacillus denitrificans (strain ATCC 25259 / T1) protein is Deoxyuridine 5'-triphosphate nucleotidohydrolase.